Consider the following 318-residue polypeptide: Small ribosomal subunit biogenesis GTPase RsgA (318 aa).

Residues 1–16 (MTRGKPGRAGHDRRHA) are compositionally biased toward basic residues. A disordered region spans residues 1–21 (MTRGKPGRAGHDRRHASTGEH). Positions 84-249 (SDQFKSKQLA…LIDSPGFQEF (166 aa)) constitute a CP-type G domain. GTP contacts are provided by residues 133–136 (NKID) and 187–195 (GQSGMGKSS). Positions 273, 278, 280, and 286 each coordinate Zn(2+).

The protein belongs to the TRAFAC class YlqF/YawG GTPase family. RsgA subfamily. As to quaternary structure, monomer. Associates with 30S ribosomal subunit, binds 16S rRNA. The cofactor is Zn(2+).

It localises to the cytoplasm. Functionally, one of several proteins that assist in the late maturation steps of the functional core of the 30S ribosomal subunit. Helps release RbfA from mature subunits. May play a role in the assembly of ribosomal proteins into the subunit. Circularly permuted GTPase that catalyzes slow GTP hydrolysis, GTPase activity is stimulated by the 30S ribosomal subunit. This Ralstonia nicotianae (strain ATCC BAA-1114 / GMI1000) (Ralstonia solanacearum) protein is Small ribosomal subunit biogenesis GTPase RsgA.